The primary structure comprises 551 residues: MKNTTNTKRTKFIFVTGGVLSSLGKGLAAASIGALLESRGLSITFQKLDPYINVDPGTMNPFQHGEVYVTDDGAETDLDMGHYERFTNAVMGQKNNFTSGRIYHTVINKERRGEYLGGTVQVIPHITDEIKKSVRQLDGSVDIAIIEIGGTVGDIEGLPFIEAIRQLRGDLGRDYTLFIHLTLVPYIKTAGEVKTKPTQHSVRELRADGIQPDILVCRTEVPLEENIKAKIALFCDVQQDAVINCVDVDSIYKLPIALHAEGLDSKILELLNIWTANPNIKPWQDLVENIQNPKNEVTIAITGKYVDLTEAYKSLHEALIHGGLANHTKVKLRYVSAEDLESGDPDSYLKGCDGILVPGGFGRRGVEGKIKAITYARENRIPFFGICLGMQLAVVEFARNMAGMSEAHSTELEPNSPDPVIYLTKEWFDYRTNKIQRRDENSDLGGTLRLGAYPCVLQQESHAGDAYGTQEVFERHRHRFEFNNDYRQQLIEKGLVISGTSPDGDLVEIVEIEDHPWFVGCQFHPEFKSKPMQAHPLFRDFISAAVANKKG.

The segment at 1–273 (MKNTTNTKRT…DSKILELLNI (273 aa)) is amidoligase domain. S21 serves as a coordination point for CTP. S21 contributes to the UTP binding site. ATP contacts are provided by residues 22–27 (SLGKGL) and D79. D79 and E147 together coordinate Mg(2+). Residues 154-156 (DIE), 194-199 (KTKPTQ), and K230 contribute to the CTP site. UTP is bound by residues 194–199 (KTKPTQ) and K230. One can recognise a Glutamine amidotransferase type-1 domain in the interval 298–551 (TIAITGKYVD…ISAAVANKKG (254 aa)). G360 provides a ligand contact to L-glutamine. Catalysis depends on C387, which acts as the Nucleophile; for glutamine hydrolysis. L-glutamine is bound by residues 388-391 (LGMQ), E411, and R479. Catalysis depends on residues H524 and E526.

Belongs to the CTP synthase family. As to quaternary structure, homotetramer.

The enzyme catalyses UTP + L-glutamine + ATP + H2O = CTP + L-glutamate + ADP + phosphate + 2 H(+). It carries out the reaction L-glutamine + H2O = L-glutamate + NH4(+). It catalyses the reaction UTP + NH4(+) + ATP = CTP + ADP + phosphate + 2 H(+). It participates in pyrimidine metabolism; CTP biosynthesis via de novo pathway; CTP from UDP: step 2/2. Allosterically activated by GTP, when glutamine is the substrate; GTP has no effect on the reaction when ammonia is the substrate. The allosteric effector GTP functions by stabilizing the protein conformation that binds the tetrahedral intermediate(s) formed during glutamine hydrolysis. Inhibited by the product CTP, via allosteric rather than competitive inhibition. Its function is as follows. Catalyzes the ATP-dependent amination of UTP to CTP with either L-glutamine or ammonia as the source of nitrogen. Regulates intracellular CTP levels through interactions with the four ribonucleotide triphosphates. This chain is CTP synthase, found in Desulfotalea psychrophila (strain LSv54 / DSM 12343).